A 142-amino-acid polypeptide reads, in one-letter code: Hemoglobin subunit alpha (142 aa).

The 141-residue stretch at 2-142 folds into the Globin domain; that stretch reads KLSAEDKHNV…VGHVLTSKYR (141 aa). Residue H59 participates in O2 binding. H88 provides a ligand contact to heme b.

This sequence belongs to the globin family. In terms of assembly, heterotetramer of two alpha chains and two beta chains. As to expression, red blood cells.

Functionally, involved in oxygen transport from the lung to the various peripheral tissues. The chain is Hemoglobin subunit alpha (HBA) from Taricha granulosa (Roughskin newt).